A 562-amino-acid chain; its full sequence is Glucocorticoid modulatory element-binding protein 1 (562 aa).

The residue at position 2 (Ala-2) is an N-acetylalanine. The 85-residue stretch at 72–156 (ASSIEANEDM…RKMMDSGQID (85 aa)) folds into the SAND domain. Position 103 (Cys-103) interacts with Zn(2+). The DNA site is built by Lys-129, Lys-133, Lys-136, and Arg-147. Positions 160, 164, and 168 each coordinate Zn(2+). Residues 311-357 (LDNRRKQVEHGEEQFLYTLADLERQLEEQKKQAQDPRLKSQTVQNVV) are a coiled coil. The segment at 360 to 384 (PVSTPKPPKRPRLQRPASTTVLSPS) is disordered. Polar residues predominate over residues 375–384 (PASTTVLSPS).

As to quaternary structure, homodimer, and heterodimer of GMEB1 and GMEB2. Interacts with the glucocorticoid receptor (NR3C1) and NCOA2/TIF2. May interact with HSP27 and CREB-binding protein (CBP). Interacts with TRIM63.

The protein resides in the nucleus. Its subcellular location is the cytoplasm. Its function is as follows. Trans-acting factor that binds to glucocorticoid modulatory elements (GME) present in the TAT (tyrosine aminotransferase) promoter and increases sensitivity to low concentrations of glucocorticoids. Also binds to the transferrin receptor promoter. The polypeptide is Glucocorticoid modulatory element-binding protein 1 (Gmeb1) (Rattus norvegicus (Rat)).